A 208-amino-acid chain; its full sequence is Heat shock protein 26 (208 aa).

3 positions are modified to phosphoserine: serine 44, serine 52, and serine 58. In terms of domain architecture, sHSP spans 71–179 (ANRNDIHWPA…KSKERIIQIQ (109 aa)). The interval 187–208 (NVKANESEVKGKENGAPNGKDK) is disordered. Residues 191 to 208 (NESEVKGKENGAPNGKDK) are compositionally biased toward basic and acidic residues.

The protein belongs to the small heat shock protein (HSP20) family.

The sequence is that of Heat shock protein 26 (Hsp26) from Drosophila melanogaster (Fruit fly).